A 92-amino-acid polypeptide reads, in one-letter code: Large ribosomal subunit protein bL27 (92 aa).

A propeptide spanning residues 1 to 9 (MLKLNLQFF) is cleaved from the precursor. The segment at 14–34 (GVGSTKNGRDSQSKRLGAKRA) is disordered.

It belongs to the bacterial ribosomal protein bL27 family. In terms of processing, the N-terminus is cleaved by ribosomal processing cysteine protease Prp.

In Exiguobacterium sibiricum (strain DSM 17290 / CCUG 55495 / CIP 109462 / JCM 13490 / 255-15), this protein is Large ribosomal subunit protein bL27.